Here is a 155-residue protein sequence, read N- to C-terminus: Small ribosomal subunit protein uS7cz/uS7cy (155 aa).

This sequence belongs to the universal ribosomal protein uS7 family. As to quaternary structure, part of the 30S ribosomal subunit.

It localises to the plastid. In terms of biological role, one of the primary rRNA binding proteins, it binds directly to 16S rRNA where it nucleates assembly of the head domain of the 30S subunit. This chain is Small ribosomal subunit protein uS7cz/uS7cy (rps7-A), found in Cuscuta obtusiflora (Peruvian dodder).